A 359-amino-acid polypeptide reads, in one-letter code: 3-dehydroquinate synthase (359 aa).

NAD(+) contacts are provided by residues 72-77 (EGEIHK), 106-110 (GVIGD), 130-131 (TS), lysine 143, lysine 152, and 170-173 (CLKT). Glutamate 185, histidine 248, and histidine 264 together coordinate Zn(2+).

Belongs to the sugar phosphate cyclases superfamily. Dehydroquinate synthase family. The cofactor is Co(2+). It depends on Zn(2+) as a cofactor. NAD(+) serves as cofactor.

Its subcellular location is the cytoplasm. It carries out the reaction 7-phospho-2-dehydro-3-deoxy-D-arabino-heptonate = 3-dehydroquinate + phosphate. It functions in the pathway metabolic intermediate biosynthesis; chorismate biosynthesis; chorismate from D-erythrose 4-phosphate and phosphoenolpyruvate: step 2/7. In terms of biological role, catalyzes the conversion of 3-deoxy-D-arabino-heptulosonate 7-phosphate (DAHP) to dehydroquinate (DHQ). The polypeptide is 3-dehydroquinate synthase (Dehalococcoides mccartyi (strain CBDB1)).